Consider the following 347-residue polypeptide: 5-deoxyribose 1-phosphate isomerase (347 aa).

Substrate contacts are provided by residues 48–50 (RGA), Arg91, and Gln198. The Proton donor role is filled by Asp239. 249–250 (NK) provides a ligand contact to substrate.

This sequence belongs to the EIF-2B alpha/beta/delta subunits family. DrdI subfamily.

It catalyses the reaction 5-deoxy-alpha-D-ribose 1-phosphate = 5-deoxy-D-ribulose 1-phosphate. Its pathway is carbohydrate degradation. Functionally, catalyzes the isomerization of 5-deoxy-alpha-D-ribose 1-phosphate to 5-deoxy-D-ribulose 1-phosphate, as part of a 5-deoxyribose salvage pathway that recycles this toxic radical SAM enzyme by-product to mainstream metabolites. The sequence is that of 5-deoxyribose 1-phosphate isomerase from Bacillus thuringiensis (strain Al Hakam).